The sequence spans 438 residues: MVKNVTVIGGGLAGSEAAWQLAKRGIEVELYEMRPKKTTPAHETANFAELVCTNSMRSNQLSNAVGLLKEEMRQLDSLIMKAADETAVPAGGALAVDRDKFSSVVTQTLKDLPNVHVHEEEITKIPKDGITIIATGPLTSDTLAEQIKDFCGTDSLHFFDAAAPIVAASSIDRDIVYKKSRYDKGEAAYLNCPMTKEEFFNFYKNLVSAETATLHGFEDKNVFEGCMPIEVMAKRGEKTMLFGPLKPVGLEDPKTGKTPYAVVQLRQDNAASTMYNIVGFQTHLKYGEQKRVFSMIPGLENAKFVRYGKMHRNTYIASPEVLNANYEARKQAGLFFAGQMTGVEGYVESAGSGLIAGINAARETVGEETLVFPKSTALGSMAHYITTTSAKHFQPMNASYALLPKLDYKVRNKQERHLEISKRALKDLETFKEEKKLD.

9 to 14 is a binding site for FAD; the sequence is GGGLAG.

The protein belongs to the MnmG family. TrmFO subfamily. FAD is required as a cofactor.

The protein resides in the cytoplasm. The catalysed reaction is uridine(54) in tRNA + (6R)-5,10-methylene-5,6,7,8-tetrahydrofolate + NADH + H(+) = 5-methyluridine(54) in tRNA + (6S)-5,6,7,8-tetrahydrofolate + NAD(+). The enzyme catalyses uridine(54) in tRNA + (6R)-5,10-methylene-5,6,7,8-tetrahydrofolate + NADPH + H(+) = 5-methyluridine(54) in tRNA + (6S)-5,6,7,8-tetrahydrofolate + NADP(+). In terms of biological role, catalyzes the folate-dependent formation of 5-methyl-uridine at position 54 (M-5-U54) in all tRNAs. This Lactobacillus gasseri (strain ATCC 33323 / DSM 20243 / BCRC 14619 / CIP 102991 / JCM 1131 / KCTC 3163 / NCIMB 11718 / NCTC 13722 / AM63) protein is Methylenetetrahydrofolate--tRNA-(uracil-5-)-methyltransferase TrmFO.